Consider the following 343-residue polypeptide: MVSTEDFDYNLPEELIAQTPMIERAASRLLVMDHETGALEDKVFYDIIDELNPGDAVVMNNTRVLPARLYGVKPDTGGHEEVLLLNNTHDDEWEVLMKPAKRAKVGTEVVFGDGQLRAIVTKELEHGGRMIEFKYDGIFMQILEALGEMPLPPYIKEKLDDPEMYQTVYAKEPGSAAAPTAGFHWTEELLQKVQDKGIKLVYLTLHVGLGTFRPVSEDNVEDHKMHSEFYRLTEEAAATLNEVKQNGGRIVATGTTSIRTLETIATKFDGEIKADSGWTEIFIKPGYQWKAVDAFITNFHLPKSTLVMLVASFTGRENILNAYQHAVDERYRFFSFGDAMFVK.

Belongs to the QueA family. Monomer.

It localises to the cytoplasm. It carries out the reaction 7-aminomethyl-7-carbaguanosine(34) in tRNA + S-adenosyl-L-methionine = epoxyqueuosine(34) in tRNA + adenine + L-methionine + 2 H(+). The protein operates within tRNA modification; tRNA-queuosine biosynthesis. Its function is as follows. Transfers and isomerizes the ribose moiety from AdoMet to the 7-aminomethyl group of 7-deazaguanine (preQ1-tRNA) to give epoxyqueuosine (oQ-tRNA). This is S-adenosylmethionine:tRNA ribosyltransferase-isomerase from Latilactobacillus sakei subsp. sakei (strain 23K) (Lactobacillus sakei subsp. sakei).